A 279-amino-acid polypeptide reads, in one-letter code: Putative potassium channel regulatory protein (279 aa).

Residues 5–74 (ELVTLNVGGM…VRTSQLSLPS (70 aa)) enclose the BTB domain. The interval 256-279 (ENSRQENYETETVQVKQAKPNKKR) is disordered.

The protein localises to the endoplasmic reticulum. In terms of biological role, inhibits potassium fluxes in cells, possibly by retaining potassium channels in the cytoplasm. The protein is Putative potassium channel regulatory protein (kcnrg) of Xenopus tropicalis (Western clawed frog).